The sequence spans 87 residues: Tektin-2 (87 aa).

Residues 26–55 (VEEELLKEVEVIEATKKALQQRVSQAFQQL) are a coiled coil.

The protein belongs to the tektin family. As to quaternary structure, microtubule inner protein component of sperm flagellar doublet microtubules. May interact with CCDC172. In terms of processing, tyrosine phosphorylated. Post-translationally, ubiquitinated, leading to its degradation. Deubiquitinated by USP16, promoting its stability. In terms of tissue distribution, detected in sperm flagella (at protein level).

The protein resides in the cytoplasm. Its subcellular location is the cytoskeleton. It is found in the cilium axoneme. The protein localises to the flagellum axoneme. It localises to the microtubule organizing center. Functionally, microtubule inner protein (MIP) part of the dynein-decorated doublet microtubules (DMTs) in cilia and flagellar axoneme. Plays a key role in the assembly or attachment of the inner dynein arm to microtubules in sperm flagella and tracheal cilia. Forms filamentous polymers in the walls of ciliary and flagellar microtubules. The sequence is that of Tektin-2 from Mesocricetus auratus (Golden hamster).